The following is a 211-amino-acid chain: uncharacterized protein (211 aa).

Composition is skewed to low complexity over residues 1 to 19 and 61 to 74; these read MQDPHVPSSPTISSVSSSD and SPSVAISRASSSNA. Disordered regions lie at residues 1–27 and 54–94; these read MQDPHVPSSPTISSVSSSDLDTESTGS and ASSR…EPHR.

Interacts with RLK902. As to expression, expressed in inflorescences, stems, rosette leaves and weakly in roots.

This is an uncharacterized protein from Arabidopsis thaliana (Mouse-ear cress).